Reading from the N-terminus, the 204-residue chain is Inactive ribonuclease-like protein 9 (204 aa).

Positions 1–26 are cleaved as a signal peptide; that stretch reads MMRTLITTHPLLLLLLLQQLLQPVQL. 3 cysteine pairs are disulfide-bonded: cysteine 97-cysteine 152, cysteine 115-cysteine 167, and cysteine 122-cysteine 129. Asparagine 130 and asparagine 142 each carry an N-linked (GlcNAc...) asparagine glycan.

Belongs to the pancreatic ribonuclease family.

It is found in the secreted. Its function is as follows. Does not exhibit any ribonuclease activity. In Chlorocebus aethiops (Green monkey), this protein is Inactive ribonuclease-like protein 9 (RNASE9).